Here is a 254-residue protein sequence, read N- to C-terminus: Leucyl/phenylalanyl-tRNA--protein transferase (254 aa).

It belongs to the L/F-transferase family.

The protein resides in the cytoplasm. The catalysed reaction is N-terminal L-lysyl-[protein] + L-leucyl-tRNA(Leu) = N-terminal L-leucyl-L-lysyl-[protein] + tRNA(Leu) + H(+). It catalyses the reaction N-terminal L-arginyl-[protein] + L-leucyl-tRNA(Leu) = N-terminal L-leucyl-L-arginyl-[protein] + tRNA(Leu) + H(+). The enzyme catalyses L-phenylalanyl-tRNA(Phe) + an N-terminal L-alpha-aminoacyl-[protein] = an N-terminal L-phenylalanyl-L-alpha-aminoacyl-[protein] + tRNA(Phe). Functions in the N-end rule pathway of protein degradation where it conjugates Leu, Phe and, less efficiently, Met from aminoacyl-tRNAs to the N-termini of proteins containing an N-terminal arginine or lysine. The protein is Leucyl/phenylalanyl-tRNA--protein transferase of Burkholderia lata (strain ATCC 17760 / DSM 23089 / LMG 22485 / NCIMB 9086 / R18194 / 383).